A 118-amino-acid polypeptide reads, in one-letter code: Large ribosomal subunit protein eL22 (118 aa).

This sequence belongs to the eukaryotic ribosomal protein eL22 family.

The chain is Large ribosomal subunit protein eL22 (RPL22) from Tetrahymena thermophila (strain SB210).